Consider the following 448-residue polypeptide: Tubulin beta-1 chain (448 aa).

8 residues coordinate GTP: Gln-11, Glu-69, Ser-138, Gly-142, Thr-143, Gly-144, Asn-204, and Asn-226. Glu-69 is a binding site for Mg(2+). The disordered stretch occupies residues 428–448; the sequence is AGIGDDEEEDEEGVMGEEIDA. A compositionally biased stretch (acidic residues) spans 430–448; that stretch reads IGDDEEEDEEGVMGEEIDA.

This sequence belongs to the tubulin family. In terms of assembly, dimer of alpha and beta chains. A typical microtubule is a hollow water-filled tube with an outer diameter of 25 nm and an inner diameter of 15 nM. Alpha-beta heterodimers associate head-to-tail to form protofilaments running lengthwise along the microtubule wall with the beta-tubulin subunit facing the microtubule plus end conferring a structural polarity. Microtubules usually have 13 protofilaments but different protofilament numbers can be found in some organisms and specialized cells. Requires Mg(2+) as cofactor.

The protein localises to the cytoplasm. Its subcellular location is the cytoskeleton. In terms of biological role, tubulin is the major constituent of microtubules, a cylinder consisting of laterally associated linear protofilaments composed of alpha- and beta-tubulin heterodimers. Microtubules grow by the addition of GTP-tubulin dimers to the microtubule end, where a stabilizing cap forms. Below the cap, tubulin dimers are in GDP-bound state, owing to GTPase activity of alpha-tubulin. This chain is Tubulin beta-1 chain (TUB-1), found in Echinococcus multilocularis (Fox tapeworm).